The chain runs to 583 residues: Radixin (583 aa).

An FERM domain is found at 5-295 (INVRVTTMDA…GNHELYMRRR (291 aa)). 60–63 (KLNK) contributes to the a 1,2-diacyl-sn-glycero-3-phospho-(1D-myo-inositol) binding site. Lysine 83 carries the N6-succinyllysine modification. Residue lysine 278 coordinates a 1,2-diacyl-sn-glycero-3-phospho-(1D-myo-inositol). Disordered regions lie at residues 310–336 (REEK…AEKE), 374–407 (ELDQ…AKQA), and 458–526 (KTKE…RVNK). Positions 374-400 (ELDQERKRAKEEAERLEKERRAAEEAK) are enriched in basic and acidic residues. Positions 469–480 (APPPPPPPPVVP) are enriched in pro residues. Composition is skewed to basic and acidic residues over residues 483-492 (ENEHDEHDEN) and 506-525 (MNHR…ERVN). Residue threonine 564 is modified to Phosphothreonine; by ROCK2.

Interacts with CPNE1 (via VWFA domain) and CPNE4 (via VWFA domain). Binds NHERF1. Interacts with NHERF1, NHERF2, LAYN, MME/NEP and ICAM2. Interacts (via FERM domain) with SPN/CD43 cytoplasmic tail. Interacts with CD44. Interacts with CLIC5; may work together in a complex which also includes EZR and MYO6 to stabilize linkages between the plasma membrane and subjacent actin cytoskeleton at the base of stereocilia. Post-translationally, phosphorylated by tyrosine-protein kinases. Phosphorylation by ROCK2 suppresses the head-to-tail association of the N-terminal and C-terminal halves resulting in an opened conformation which is capable of actin and membrane-binding.

The protein resides in the cell membrane. The protein localises to the cytoplasm. It is found in the cytoskeleton. Its subcellular location is the cleavage furrow. It localises to the cell projection. The protein resides in the microvillus. The protein localises to the stereocilium. Its activity is regulated as follows. A head-to-tail association, of the N-terminal and C-terminal halves results in a closed conformation (inactive form) which is incapable of actin or membrane-binding. Probably plays a crucial role in the binding of the barbed end of actin filaments to the plasma membrane. The protein is Radixin (RDX) of Sus scrofa (Pig).